A 249-amino-acid chain; its full sequence is 2,3-bisphosphoglycerate-dependent phosphoglycerate mutase (249 aa).

Residues 8 to 15 (RHGESVWN), 21 to 22 (TG), Arg-60, 87 to 90 (ERHY), Lys-98, 114 to 115 (RR), and 183 to 184 (GN) contribute to the substrate site. The Tele-phosphohistidine intermediate role is filled by His-9. The active-site Proton donor/acceptor is Glu-87.

This sequence belongs to the phosphoglycerate mutase family. BPG-dependent PGAM subfamily.

It catalyses the reaction (2R)-2-phosphoglycerate = (2R)-3-phosphoglycerate. Its pathway is carbohydrate degradation; glycolysis; pyruvate from D-glyceraldehyde 3-phosphate: step 3/5. Its function is as follows. Catalyzes the interconversion of 2-phosphoglycerate and 3-phosphoglycerate. In Chloroherpeton thalassium (strain ATCC 35110 / GB-78), this protein is 2,3-bisphosphoglycerate-dependent phosphoglycerate mutase.